The chain runs to 246 residues: MTYKLVLLRHGQSAWNKTNQFTGWVDVPLTEQGEAEAKRGGELLKEKNVLPDIVFTSLLRRAINTANIALDAADRLWIPVQRDWRLNERHYGALQGKNKTEIREEYGDEKFMLWRRSYATPPPEIDPNDQYAQNNDPRYAGDPVPEAECLANVVERVKPYFESAIEPELKAGKTVLIAAHGNSLRAIVKMLDNLSEEEIAKVNIPTAIPLLYELDENFKPIKPRGEYLDPEAAAAGAAAVAAQGQK.

Residues 9-16 (RHGQSAWN), 22-23 (TG), arginine 61, 88-91 (ERHY), lysine 99, 115-116 (RR), and 181-182 (GN) contribute to the substrate site. Catalysis depends on histidine 10, which acts as the Tele-phosphohistidine intermediate. Glutamate 88 (proton donor/acceptor) is an active-site residue.

This sequence belongs to the phosphoglycerate mutase family. BPG-dependent PGAM subfamily.

The catalysed reaction is (2R)-2-phosphoglycerate = (2R)-3-phosphoglycerate. It participates in carbohydrate degradation; glycolysis; pyruvate from D-glyceraldehyde 3-phosphate: step 3/5. Functionally, catalyzes the interconversion of 2-phosphoglycerate and 3-phosphoglycerate. The protein is 2,3-bisphosphoglycerate-dependent phosphoglycerate mutase of Bifidobacterium longum (strain DJO10A).